We begin with the raw amino-acid sequence, 916 residues long: Alanine--tRNA ligase (916 aa).

Residues histidine 611, histidine 615, cysteine 714, and histidine 718 each coordinate Zn(2+).

This sequence belongs to the class-II aminoacyl-tRNA synthetase family. Requires Zn(2+) as cofactor.

It is found in the cytoplasm. The catalysed reaction is tRNA(Ala) + L-alanine + ATP = L-alanyl-tRNA(Ala) + AMP + diphosphate. In terms of biological role, catalyzes the attachment of alanine to tRNA(Ala) in a two-step reaction: alanine is first activated by ATP to form Ala-AMP and then transferred to the acceptor end of tRNA(Ala). Also edits incorrectly charged Ser-tRNA(Ala) and Gly-tRNA(Ala) via its editing domain. The polypeptide is Alanine--tRNA ligase (Methanospirillum hungatei JF-1 (strain ATCC 27890 / DSM 864 / NBRC 100397 / JF-1)).